A 289-amino-acid chain; its full sequence is Glycine--tRNA ligase alpha subunit (289 aa).

It belongs to the class-II aminoacyl-tRNA synthetase family. As to quaternary structure, tetramer of two alpha and two beta subunits.

It is found in the cytoplasm. The catalysed reaction is tRNA(Gly) + glycine + ATP = glycyl-tRNA(Gly) + AMP + diphosphate. This Rickettsia prowazekii (strain Madrid E) protein is Glycine--tRNA ligase alpha subunit (glyQ).